The chain runs to 457 residues: Argininosuccinate lyase (457 aa).

This sequence belongs to the lyase 1 family. Argininosuccinate lyase subfamily.

It localises to the cytoplasm. It catalyses the reaction 2-(N(omega)-L-arginino)succinate = fumarate + L-arginine. Its pathway is amino-acid biosynthesis; L-arginine biosynthesis; L-arginine from L-ornithine and carbamoyl phosphate: step 3/3. The chain is Argininosuccinate lyase from Haemophilus influenzae (strain PittEE).